Here is a 1045-residue protein sequence, read N- to C-terminus: Elongation factor 3 (1045 aa).

3 residues coordinate ADP: Ile-42, His-44, and Ser-83. HEAT repeat units follow at residues 86 to 123, 125 to 162, 166 to 203, 171 to 209, 205 to 241, 242 to 279, and 285 to 323; these read PYVV…AVNP, AVKA…QAKS, LRMT…TVEN, LIPV…IERF, DIER…EVTP, ATLS…LVED, and PFLN…VGAV. The ADP site is built by Thr-392 and His-396. ABC transporter domains follow at residues 426–641 and 667–993; these read EEGE…YYEL and VKVS…KKED. Residues Asn-703, Glu-922, Asn-925, and His-951 each coordinate ADP. A disordered region spans residues 975 to 1045; the sequence is GHNWVSGQGS…AYVSDDDADF (71 aa). The segment covering 1020-1031 has biased composition (basic residues); sequence RKKKKERMKKKK.

Belongs to the ABC transporter superfamily. ABCF family. EF3 subfamily.

The protein localises to the cytoplasm. The protein resides in the cytosol. It catalyses the reaction ATP + H2O = ADP + phosphate + H(+). It functions in the pathway protein biosynthesis; polypeptide chain elongation. Ribosome-dependent ATPase that functions in cytoplasmic translation elongation. Required for the ATP-dependent release of deacylated tRNA from the ribosomal E-site during protein biosynthesis. Stimulates the eEF1A-dependent binding of aminoacyl-tRNA to the ribosomal A-site, which has reduced affinity for tRNA as long as the E-site is occupied. Assists translation termination by stimulating the release of nascent protein from the ribosome by release factors. In Zygosaccharomyces rouxii (strain ATCC 2623 / CBS 732 / NBRC 1130 / NCYC 568 / NRRL Y-229), this protein is Elongation factor 3.